Reading from the N-terminus, the 740-residue chain is Catalase-peroxidase (740 aa).

Basic and acidic residues predominate over residues 1 to 16 (MSENHDAIVTDAKTEE). Residues 1-38 (MSENHDAIVTDAKTEETDGCPVAHGRAPHPTQGGGNRQ) form a disordered region. Positions 108–231 (WHSAGTYRIS…LGAVQMGLIY (124 aa)) form a cross-link, tryptophyl-tyrosyl-methioninium (Trp-Tyr) (with M-257). Residue His109 is the Proton acceptor of the active site. The tryptophyl-tyrosyl-methioninium (Tyr-Met) (with W-108) cross-link spans 231–257 (YVNPEGPNGNPDPIAAARDIRETFRRM). His272 is a binding site for heme b.

The protein belongs to the peroxidase family. Peroxidase/catalase subfamily. As to quaternary structure, homodimer. Heme b serves as cofactor. Formation of the three residue Trp-Tyr-Met cross-link is important for the catalase, but not the peroxidase activity of the enzyme.

It catalyses the reaction H2O2 + AH2 = A + 2 H2O. The enzyme catalyses 2 H2O2 = O2 + 2 H2O. Bifunctional enzyme with both catalase and broad-spectrum peroxidase activity. This is Catalase-peroxidase from Streptomyces coelicolor (strain ATCC BAA-471 / A3(2) / M145).